A 507-amino-acid chain; its full sequence is Maturase K (507 aa).

It belongs to the intron maturase 2 family. MatK subfamily.

It is found in the plastid. The protein resides in the chloroplast. Usually encoded in the trnK tRNA gene intron. Probably assists in splicing its own and other chloroplast group II introns. In Lens culinaris (Lentil), this protein is Maturase K.